We begin with the raw amino-acid sequence, 171 residues long: 3-hydroxydecanoyl-[acyl-carrier-protein] dehydratase (171 aa).

Residue His70 is part of the active site.

This sequence belongs to the thioester dehydratase family. FabA subfamily. As to quaternary structure, homodimer.

It localises to the cytoplasm. The enzyme catalyses a (3R)-hydroxyacyl-[ACP] = a (2E)-enoyl-[ACP] + H2O. It catalyses the reaction (3R)-hydroxydecanoyl-[ACP] = (2E)-decenoyl-[ACP] + H2O. The catalysed reaction is (2E)-decenoyl-[ACP] = (3Z)-decenoyl-[ACP]. The protein operates within lipid metabolism; fatty acid biosynthesis. Its function is as follows. Necessary for the introduction of cis unsaturation into fatty acids. Catalyzes the dehydration of (3R)-3-hydroxydecanoyl-ACP to E-(2)-decenoyl-ACP and then its isomerization to Z-(3)-decenoyl-ACP. Can catalyze the dehydratase reaction for beta-hydroxyacyl-ACPs with saturated chain lengths up to 16:0, being most active on intermediate chain length. The protein is 3-hydroxydecanoyl-[acyl-carrier-protein] dehydratase of Vibrio campbellii (strain ATCC BAA-1116).